The chain runs to 138 residues: Ig heavy chain V region TEPC 1017 (138 aa).

A signal peptide spans 1 to 20 (MGWSYIILFLVATATDVHSQ). Positions 21–49 (VQLQQPGAELVKPGASVQLSCKASGHTFT) are framework-1. A disulfide bond links Cys-41 and Cys-115. The interval 50–54 (NYWIH) is complementarity-determining-1. The framework-2 stretch occupies residues 55–68 (WVKQRPGQGLEWIG). Positions 69–85 (EINPNDGRSNYNEKFKN) are complementarity-determining-2. Positions 86–117 (KATLTVDKSSSTAYMQLSSLTPEEFAVYYCAR) are framework-3. Residues 118 to 127 (SDGYYDWFVY) are complementarity-determining-3. The framework-4 stretch occupies residues 128–138 (WGQGTLVTFSA).

The chain is Ig heavy chain V region TEPC 1017 from Mus musculus (Mouse).